The following is a 121-amino-acid chain: Basic phospholipase A2 F17 (121 aa).

Disulfide bonds link Cys25/Cys114, Cys27/Cys43, Cys42/Cys94, Cys48/Cys121, Cys49/Cys87, Cys56/Cys80, and Cys74/Cys85. 3 residues coordinate Ca(2+): Tyr26, Gly28, and Gly30. The active site involves His46. Asp47 serves as a coordination point for Ca(2+). Asp88 is an active-site residue.

Belongs to the phospholipase A2 family. Group II subfamily. D49 sub-subfamily. When this protein is associated with crotapotin (F5 or F7), it forms the crotoxin protein. Requires Ca(2+) as cofactor. As to expression, expressed by the venom gland.

The protein resides in the secreted. It carries out the reaction a 1,2-diacyl-sn-glycero-3-phosphocholine + H2O = a 1-acyl-sn-glycero-3-phosphocholine + a fatty acid + H(+). With respect to regulation, activated by heparin. Inhibited by its chaperone crotapotin. Functionally, snake venom phospholipase A2 (PLA2) that has anticoagulant activity and inhibits bactericial growth of the Gram-negative bacteria Xanthomonas axonopodis pv. passiflorae (in monomeric form). PLA2 catalyzes the calcium-dependent hydrolysis of the 2-acyl groups in 3-sn-phosphoglycerides. The protein is Basic phospholipase A2 F17 of Crotalus durissus terrificus (South American rattlesnake).